The sequence spans 283 residues: Flagellar filament 35 kDa core protein (283 aa).

It belongs to the bacterial flagellin family. The flagellum consists of two outer layers around a core that contains several antigenically related polypeptides.

Its subcellular location is the periplasmic flagellum. It is found in the periplasm. Component of the core of the flagella. In Leptospira interrogans serogroup Icterohaemorrhagiae serovar Lai (strain 56601), this protein is Flagellar filament 35 kDa core protein (flaB).